Here is a 125-residue protein sequence, read N- to C-terminus: Glycine cleavage system H protein (125 aa).

The Lipoyl-binding domain occupies 22–104 (SYIIGITDFA…YDTGWILKLT (83 aa)). K63 carries the post-translational modification N6-lipoyllysine.

The protein belongs to the GcvH family. The glycine cleavage system is composed of four proteins: P, T, L and H. The cofactor is (R)-lipoate.

Its function is as follows. The glycine cleavage system catalyzes the degradation of glycine. The H protein shuttles the methylamine group of glycine from the P protein to the T protein. In terms of biological role, is also involved in protein lipoylation via its role as an octanoyl/lipoyl carrier protein intermediate. The sequence is that of Glycine cleavage system H protein from Listeria welshimeri serovar 6b (strain ATCC 35897 / DSM 20650 / CCUG 15529 / CIP 8149 / NCTC 11857 / SLCC 5334 / V8).